Here is a 216-residue protein sequence, read N- to C-terminus: Hexitol phosphatase A (216 aa).

Asp-9 (nucleophile) is an active-site residue. A divalent metal cation contacts are provided by Asp-9 and Asp-11. Residues 9–11, 106–107, and Lys-138 each bind substrate; these read DLD and TS. Asp-11 functions as the Proton donor in the catalytic mechanism. Asp-163 contacts a divalent metal cation.

This sequence belongs to the HAD-like hydrolase superfamily. CbbY/CbbZ/Gph/YieH family. The cofactor is Mg(2+). It depends on Mn(2+) as a cofactor. Requires Co(2+) as cofactor.

The catalysed reaction is sugar phosphate + H2O = sugar + phosphate.. The enzyme catalyses D-mannitol 1-phosphate + H2O = D-mannitol + phosphate. It catalyses the reaction D-sorbitol 6-phosphate + H2O = D-sorbitol + phosphate. Functionally, sugar-phosphate phosphohydrolase that appears to contribute to butanol tolerance. Catalyzes the dephosphorylation of D-mannitol 1-phosphate and D-sorbitol 6-phosphate. Is also able to dephosphorylate other sugar phosphates in vitro including ribose-5-phosphate (Rib5P), 2-deoxyribose-5-phosphate, fructose-1-phosphate (Fru1P), fructose-6-phosphate (Fru6P), and glucose-6-phosphate (Glu6P). Selectively hydrolyzes beta-D-glucose-1-phosphate (bGlu1P) and has no activity with the alpha form. This is Hexitol phosphatase A from Escherichia coli (strain K12).